The following is a 398-amino-acid chain: O-methyltransferase hmp5 (398 aa).

Residues 233-234, Glu-261, and 283-284 contribute to the S-adenosyl-L-methionine site; these read GG and DF. Residue His-303 is the Proton acceptor of the active site.

It belongs to the class I-like SAM-binding methyltransferase superfamily. Cation-independent O-methyltransferase family.

Its pathway is secondary metabolite biosynthesis. Its function is as follows. O-methyltransferase; part of the gene cluster that mediates the biosynthesis of hypothemycin, a resorcylic acid lactone (RAL) that irreversibly inhibits a subset of protein kinases with a conserved cysteine in the ATP binding site such as human ERK2. The first step is performed by both PKSs hmp3 and hmp8 and leads to the production of 7',8'-dehydrozearalenol (DHZ). The highly reducing PKS hpm8 synthesizes the reduced hexaketide (7S,11S,2E,8E)-7,11-dihydroxy-dodeca-2,8-dienoate, which is transferred downstream to the non-reducing PKS hpm3. Hpm3 then extends the reduced hexaketide to a nonaketide, after which regioselective cyclization and macrolactonization affords DHZ. The next step is the conversion of DHZ into aigialomycin C and is performed by the O-methyltransferase hmp5, the FAD-binding monooxygenase hmp7, and the cytochrome P450 monooxygenase hmp1. The wide substrate tolerance of the hmp5 and hmp7 implies that the reactions from DHZ to aigialomycin C can occur in any order. The steps from aigialomycin C to hypothemycin are less well established. The FAD-linked oxidoreductase hmp9 presumably catalyzes oxidation of the C-6' hydroxyl to a ketone. The timing of this oxidation is important, since the resulting enone functional group is a Michael acceptor that can react spontaneously with glutathione, an abundant metabolite in fungal cells. The glutathione S-transferase hmp2 catalyzes cis-trans isomerization of the 7',8' double bond with equilibrium favoring the trans isomer. The hpm6-encoded transporter might preferentially pump hypothemycin out of the cell relative to the trans isomer aigialomycin A. The cis-to-trans isomerization may be coupled with C-4' hydroxylation, since all known hypothemycin analogs containing the enone functional group also have hydroxyl groups at both C-4' and C-5'. The chain is O-methyltransferase hmp5 from Hypomyces subiculosus (Nectria subiculosa).